A 338-amino-acid chain; its full sequence is Glycerol-3-phosphate dehydrogenase [NAD(P)+] (338 aa).

3 residues coordinate NADPH: serine 13, tryptophan 14, and lysine 108. Sn-glycerol 3-phosphate contacts are provided by lysine 108, glycine 139, and serine 141. Alanine 143 serves as a coordination point for NADPH. 5 residues coordinate sn-glycerol 3-phosphate: lysine 194, aspartate 247, serine 257, arginine 258, and asparagine 259. The active-site Proton acceptor is lysine 194. An NADPH-binding site is contributed by arginine 258. Valine 282 and glutamate 284 together coordinate NADPH.

The protein belongs to the NAD-dependent glycerol-3-phosphate dehydrogenase family.

The protein resides in the cytoplasm. The catalysed reaction is sn-glycerol 3-phosphate + NAD(+) = dihydroxyacetone phosphate + NADH + H(+). It carries out the reaction sn-glycerol 3-phosphate + NADP(+) = dihydroxyacetone phosphate + NADPH + H(+). It participates in membrane lipid metabolism; glycerophospholipid metabolism. Functionally, catalyzes the reduction of the glycolytic intermediate dihydroxyacetone phosphate (DHAP) to sn-glycerol 3-phosphate (G3P), the key precursor for phospholipid synthesis. In Listeria innocua serovar 6a (strain ATCC BAA-680 / CLIP 11262), this protein is Glycerol-3-phosphate dehydrogenase [NAD(P)+].